Reading from the N-terminus, the 354-residue chain is MGYLDLALSYSNQPQTVEAPASGGGLSQNGKFSYGYASSAGKRSSMEDFFETRIDGINGEIVGLFGVFDGHGGARAAEYVKRHLFSNLITHPKFISDTKSAITDAYNHTDSELLKSENSHNRDAGSTASTAILVGDRLVVANVGDSRAVISRGGKAIAVSRDHKPDQSDERERIENAGGFVMWAGTWRVGGVLAVSRAFGDRLLKQYVVADPEIQEEKIDDTLEFLILASDGLWDVFSNEAAVAMVKEVEDPEDSAKKLVGEAIKRGSADNITCVVVRFLEKKSASSSHISSSSSKEAKEMPPLGDLAISSNEAKQVQIGSGNKPENVTNRKPDTASRSTDTLTLERNSVTDKV.

The region spanning 33-279 is the PPM-type phosphatase domain; it reads SYGYASSAGK…DNITCVVVRF (247 aa). D69, G70, D231, and D270 together coordinate Mn(2+). Residues 289-354 form a disordered region; that stretch reads HISSSSSKEA…LERNSVTDKV (66 aa). Polar residues-rich tracts occupy residues 309 to 328 and 336 to 348; these read ISSN…PENV and ASRS…LERN.

It belongs to the PP2C family. It depends on Mg(2+) as a cofactor. The cofactor is Mn(2+).

The enzyme catalyses O-phospho-L-seryl-[protein] + H2O = L-seryl-[protein] + phosphate. The catalysed reaction is O-phospho-L-threonyl-[protein] + H2O = L-threonyl-[protein] + phosphate. The polypeptide is Probable protein phosphatase 2C 69 (Arabidopsis thaliana (Mouse-ear cress)).